The chain runs to 456 residues: tRNA modification GTPase MnmE (456 aa).

3 residues coordinate (6S)-5-formyl-5,6,7,8-tetrahydrofolate: R25, E87, and R126. The 157-residue stretch at 221 to 377 (GLKVAIVGQP…LENAIIEQVN (157 aa)) folds into the TrmE-type G domain. Residue N231 coordinates K(+). GTP contacts are provided by residues 231 to 236 (NVGKSS), 250 to 256 (TDLPGTT), and 275 to 278 (DTAG). Mg(2+) is bound at residue S235. T250, L252, and T255 together coordinate K(+). T256 contributes to the Mg(2+) binding site. K456 provides a ligand contact to (6S)-5-formyl-5,6,7,8-tetrahydrofolate.

The protein belongs to the TRAFAC class TrmE-Era-EngA-EngB-Septin-like GTPase superfamily. TrmE GTPase family. In terms of assembly, homodimer. Heterotetramer of two MnmE and two MnmG subunits. K(+) is required as a cofactor.

Its subcellular location is the cytoplasm. Its function is as follows. Exhibits a very high intrinsic GTPase hydrolysis rate. Involved in the addition of a carboxymethylaminomethyl (cmnm) group at the wobble position (U34) of certain tRNAs, forming tRNA-cmnm(5)s(2)U34. In Synechocystis sp. (strain ATCC 27184 / PCC 6803 / Kazusa), this protein is tRNA modification GTPase MnmE.